Here is a 289-residue protein sequence, read N- to C-terminus: Serine/threonine-protein phosphatase Pgam5, mitochondrial (289 aa).

This sequence belongs to the phosphoglycerate mutase family. BPG-dependent PGAM subfamily. In terms of assembly, interacts with Pk92B/ASK1.

Its subcellular location is the mitochondrion outer membrane. The catalysed reaction is O-phospho-L-seryl-[protein] + H2O = L-seryl-[protein] + phosphate. It catalyses the reaction O-phospho-L-threonyl-[protein] + H2O = L-threonyl-[protein] + phosphate. Functionally, displays phosphatase activity for serine/threonine residues, and dephosphorylates and activates Pk92B kinase. Has apparently no phosphoglycerate mutase activity. The protein is Serine/threonine-protein phosphatase Pgam5, mitochondrial of Drosophila yakuba (Fruit fly).